Here is a 235-residue protein sequence, read N- to C-terminus: Alpha-S2-casein (235 aa).

Positions 1–15 (MKFFIFTCLLAVAFA) are cleaved as a signal peptide. S23, S24, S25, S28, S47, S72, S73, S74, S77, S147, S149, and S168 each carry phosphoserine. Over residues 144–158 (EELSTSEEPVSSSQE) the composition is skewed to polar residues. A disordered region spans residues 144–163 (EELSTSEEPVSSSQEENTKT).

This sequence belongs to the alpha-casein family. Mammary gland specific. Secreted in milk.

Its subcellular location is the secreted. Important role in the capacity of milk to transport calcium phosphate. The polypeptide is Alpha-S2-casein (CSN1S2) (Sus scrofa (Pig)).